Reading from the N-terminus, the 124-residue chain is Large ribosomal subunit protein bL12 (124 aa).

Belongs to the bacterial ribosomal protein bL12 family. In terms of assembly, homodimer. Part of the ribosomal stalk of the 50S ribosomal subunit. Forms a multimeric L10(L12)X complex, where L10 forms an elongated spine to which 2 to 4 L12 dimers bind in a sequential fashion. Binds GTP-bound translation factors.

Its function is as follows. Forms part of the ribosomal stalk which helps the ribosome interact with GTP-bound translation factors. Is thus essential for accurate translation. The chain is Large ribosomal subunit protein bL12 from Christiangramia forsetii (strain DSM 17595 / CGMCC 1.15422 / KT0803) (Gramella forsetii).